The primary structure comprises 1115 residues: Gamma tubulin complex adapter mto1 (1115 aa).

Residues 25–180 form a disordered region; the sequence is LTDEEVRRIL…NYISSSLDQL (156 aa). Basic and acidic residues-rich tracts occupy residues 28–41 and 56–71; these read EEVRRILSPRKEGS and EASHKYDFEIDRDSLK. Polar residues-rich tracts occupy residues 72-102, 119-130, and 139-151; these read SDSGSPRLHQNATAPTSSTPLQSPDESVNKL, DTTNFDRLNDNI, and PVLTANQGFQSQE. Phosphoserine is present on Ser94. The span at 165-176 shows a compositional bias: low complexity; the sequence is SDPSSPNYISSS. The stretch at 445-915 forms a coiled coil; sequence NEALLLRKQE…ERNSLIKNIV (471 aa). The required for interaction with mto2 stretch occupies residues 523 to 537; sequence LMRMEQQWREDVDQL. The span at 1001 to 1011 shows a compositional bias: polar residues; sequence GSTSSIPNSPR. Disordered regions lie at residues 1001 to 1037 and 1067 to 1115; these read GSTSSIPNSPRASKRVSLDSEDKKLVPASPDKSAVQR and EQEG…QEHK. Ser1005 and Ser1009 each carry phosphoserine. Composition is skewed to basic and acidic residues over residues 1016–1025 and 1067–1084; these read VSLDSEDKKL and EQEGRKRDKLGARERLQD. The stretch at 1072 to 1102 forms a coiled coil; sequence KRDKLGARERLQDLIRQNRSLSRQIKTDKES. Polar residues-rich tracts occupy residues 1086 to 1095 and 1104 to 1115; these read IRQNRSLSRQ and SRSPSISSQEHK.

Interacts with mto2; the interaction is direct and required for efficient binding to the gamma-tubulin complex. Interacts with gamma tubulin complex subunits alp4, alp6 and gtb1. Interacts with mcp6.

Its subcellular location is the cytoplasm. The protein resides in the cytoskeleton. It is found in the microtubule organizing center. It localises to the spindle pole body. Functionally, spindle pole body (SPB) component that acts as the gamma-tubulin complex-binding protein of the SPB outer plaque. Promotes nucleation of all cytoplasmic microtubules by recruiting the gamma-tubulin complex to the spindle pole body (SPB), to the interphase microtubule organizing center (iMTOC), and to the equatorial MTOC (eMTOC) during anaphase. The sequence is that of Gamma tubulin complex adapter mto1 from Schizosaccharomyces pombe (strain 972 / ATCC 24843) (Fission yeast).